The following is a 301-amino-acid chain: rRNA methyltransferase 1, mitochondrial (301 aa).

A mitochondrion-targeting transit peptide spans 1 to 11; sequence MIRSRVNLARE. The segment at 121-141 is disordered; the sequence is YNNKNGQDSPHNDLNEGKSSS.

Belongs to the class IV-like SAM-binding methyltransferase superfamily. RNA methyltransferase TrmH family.

The protein localises to the mitochondrion. The enzyme catalyses a guanosine in 21S rRNA + S-adenosyl-L-methionine = a 2'-O-methylguanosine in 21S rRNA + S-adenosyl-L-homocysteine + H(+). In terms of biological role, S-adenosyl-L-methionine-dependent 2'-O-ribose methyltransferase that catalyzes the formation of the 2'-O-methylguanosine corresponding to position 2270 in S.cerevisiae 21S mitochondrial large subunit ribosomal RNA (mtLSU rRNA), a universally conserved modification in the peptidyl transferase domain of the mtLSU rRNA. This Schizosaccharomyces pombe (strain 972 / ATCC 24843) (Fission yeast) protein is rRNA methyltransferase 1, mitochondrial.